The following is a 347-amino-acid chain: MTVVPVKLNELKNKLVIIDQTLLPNEEKFLELDNPEEIWEAIKKLRVRGAPAIGIAAAFGLYVSTLKSKAANVAQFKKEFEEVRDYFATSRPTAVNLFWALKRMTRRFEQEEDKTVDKIKQALLDESEKIFAEDQEMSKAIGKHGLSLLKPGMGLLTHCNAGGLASSGYGTALAPIYLGHEKGYNFKVYADETRPLLQGARLTTYELYKAGIDVTLICDDMASLVMKEGKIDAVLVGCDRVAANGDTANKIGTSGLAVLAKEYGIPMYILGPTSTIDLDASTGEDIKIELRDEEEVVNGFGRRTALKGVKAYNPAFDVTDAKYITAIITEKGIVMQPYKESLKKLFE.

Residues 48–50, Arg91, and Gln198 each bind substrate; that span reads RGA. The Proton donor role is filled by Asp239. 249–250 is a substrate binding site; the sequence is NK.

It belongs to the EIF-2B alpha/beta/delta subunits family. DrdI subfamily.

It carries out the reaction 5-deoxy-alpha-D-ribose 1-phosphate = 5-deoxy-D-ribulose 1-phosphate. Its pathway is carbohydrate degradation. In terms of biological role, catalyzes the isomerization of 5-deoxy-alpha-D-ribose 1-phosphate to 5-deoxy-D-ribulose 1-phosphate, as part of a 5-deoxyribose salvage pathway that recycles this toxic radical SAM enzyme by-product to mainstream metabolites. This chain is 5-deoxyribose 1-phosphate isomerase, found in Petrotoga mobilis (strain DSM 10674 / SJ95).